The sequence spans 340 residues: tRNA N6-adenosine threonylcarbamoyltransferase (340 aa).

His-114 and His-118 together coordinate Fe cation. Substrate contacts are provided by residues 140-144 (TISGG), Asp-173, Gly-186, Asp-190, and Asn-281. Asp-309 is a binding site for Fe cation.

The protein belongs to the KAE1 / TsaD family. Fe(2+) serves as cofactor.

It localises to the cytoplasm. The catalysed reaction is L-threonylcarbamoyladenylate + adenosine(37) in tRNA = N(6)-L-threonylcarbamoyladenosine(37) in tRNA + AMP + H(+). In terms of biological role, required for the formation of a threonylcarbamoyl group on adenosine at position 37 (t(6)A37) in tRNAs that read codons beginning with adenine. Is involved in the transfer of the threonylcarbamoyl moiety of threonylcarbamoyl-AMP (TC-AMP) to the N6 group of A37, together with TsaE and TsaB. TsaD likely plays a direct catalytic role in this reaction. The sequence is that of tRNA N6-adenosine threonylcarbamoyltransferase from Christiangramia forsetii (strain DSM 17595 / CGMCC 1.15422 / KT0803) (Gramella forsetii).